A 125-amino-acid chain; its full sequence is Small ribosomal subunit protein uS13 (125 aa).

Residues 95 to 125 (GLPVNGQRTRTNARTRKGVKKTVANKKKATK) are disordered. Over residues 105 to 125 (TNARTRKGVKKTVANKKKATK) the composition is skewed to basic residues.

The protein belongs to the universal ribosomal protein uS13 family. Part of the 30S ribosomal subunit. Forms a loose heterodimer with protein S19. Forms two bridges to the 50S subunit in the 70S ribosome.

Its function is as follows. Located at the top of the head of the 30S subunit, it contacts several helices of the 16S rRNA. In the 70S ribosome it contacts the 23S rRNA (bridge B1a) and protein L5 of the 50S subunit (bridge B1b), connecting the 2 subunits; these bridges are implicated in subunit movement. Contacts the tRNAs in the A and P-sites. This Leptospira biflexa serovar Patoc (strain Patoc 1 / Ames) protein is Small ribosomal subunit protein uS13.